Reading from the N-terminus, the 183-residue chain is Protein jagunal homolog 1 (183 aa).

Topologically, residues 1 to 39 (MASRAGPRAAGTDGSDFQHRERVAMHYQMSVTLKYEIKK) are cytoplasmic. Residue S3 is modified to Phosphoserine. The chain crosses the membrane as a helical span at residues 40–60 (LIYVHLVIWLLLVAKMSVGHL). Residues 61–71 (RLLSHDQVAMP) are Lumenal-facing. The helical transmembrane segment at 72-92 (YQWEYPYLLSILPSLLGLLSF) threads the bilayer. The Cytoplasmic portion of the chain corresponds to 93 to 96 (PRNN). Residues 97–117 (ISYLVLSMISMGLFSIAPLIY) traverse the membrane as a helical segment. The Lumenal segment spans residues 118–137 (GSMEMFPAAQQLYRHGKAYR). Residues 138–158 (FLFGFSAVSIMYLVLVLAVQV) traverse the membrane as a helical segment. Over 159–183 (HAWQLYYSKKLLDSWFTSTQEKKHK) the chain is Cytoplasmic.

Belongs to the jagunal family. Interacts with COPA, COPB2 and COPG2. As to expression, ubiquitously expressed.

The protein resides in the endoplasmic reticulum membrane. In terms of biological role, endoplasmic reticulum transmembrane protein involved in vesicle-mediated transport, which is required for neutrophil function. Required for vesicle-mediated transport; it is however unclear whether it is involved in early secretory pathway or intracellular protein transport. Acts as a regulator of neutrophil function, probably via its role in vesicle-mediated transport: required for defense against fungal pathogens and for granulocyte colony-stimulating factor (GM-CSF) signaling pathway; possibly by regulating glycosylation and/or targeting of proteins contributing to the viability and migration of neutrophils. The sequence is that of Protein jagunal homolog 1 from Homo sapiens (Human).